The primary structure comprises 676 residues: Exostosin-like 1 (676 aa).

At 1–9 (MQSWRRRKS) the chain is on the cytoplasmic side. Residues 10 to 30 (LWLALSASWLLLVLLGGFSLL) form a helical; Signal-anchor for type II membrane protein membrane-spanning segment. Over 31-676 (RLALPPRPRP…RKKYRSLEKP (646 aa)) the chain is Lumenal. A disordered region spans residues 238 to 264 (TADTGSSACPWDGRCEQDPGPGQTQRQ). An N-linked (GlcNAc...) asparagine glycan is attached at asparagine 269. The cysteines at positions 584 and 634 are disulfide-linked. The interval 610-631 (RQEAAPLAPGGPGPRPKPPAPA) is disordered. Residues 618-631 (PGGPGPRPKPPAPA) are compositionally biased toward pro residues.

The protein belongs to the glycosyltransferase 47 family.

The protein localises to the endoplasmic reticulum membrane. It catalyses the reaction 3-O-{[(1-&gt;4)-beta-D-GlcA-(1-&gt;4)-alpha-D-GlcNAc](n)-(1-&gt;4)-beta-D-GlcA-(1-&gt;3)-beta-D-Gal-(1-&gt;3)-beta-D-Gal-(1-&gt;4)-beta-D-Xyl}-L-seryl-[protein] + UDP-N-acetyl-alpha-D-glucosamine = 3-O-{alpha-D-GlcNAc-[(1-&gt;4)-beta-D-GlcA-(1-&gt;4)-alpha-D-GlcNAc](n)-(1-&gt;4)-beta-D-GlcA-(1-&gt;3)-beta-D-Gal-(1-&gt;3)-beta-D-Gal-(1-&gt;4)-beta-D-Xyl}-L-seryl-[protein] + UDP + H(+). It participates in protein modification; protein glycosylation. Functionally, glycosyltransferase required for the biosynthesis of heparan-sulfate (HS). Transfers N-acetyl-alpha-D-glucosamine to the nascent HS chain (GlcNAcT-II activity). Appears to lack GlcNAcT I and GlcAT-II activities. The chain is Exostosin-like 1 (EXTL1) from Homo sapiens (Human).